An 836-amino-acid polypeptide reads, in one-letter code: Subtilisin-like protease PIMMS2 (836 aa).

Active-site charge relay system residues include aspartate 155, histidine 222, and serine 414. The segment at 802–836 is disordered; that stretch reads EKKNKYNNSVLKRNEMKSHNNSQKTPKIIPRKYSR.

It belongs to the peptidase S8 family.

It is found in the cell membrane. The enzyme catalyses Hydrolysis of proteins with broad specificity for peptide bonds, and a preference for a large uncharged residue in P1. Hydrolyzes peptide amides.. In terms of biological role, probable serine protease which plays a role in ookinete traversal of the mosquito host midgut epithelium. The protein is Subtilisin-like protease PIMMS2 of Plasmodium berghei (strain Anka).